The following is a 103-amino-acid chain: Small ribosomal subunit protein uS10 (103 aa).

The protein belongs to the universal ribosomal protein uS10 family. Part of the 30S ribosomal subunit.

Functionally, involved in the binding of tRNA to the ribosomes. The chain is Small ribosomal subunit protein uS10 from Campylobacter hominis (strain ATCC BAA-381 / DSM 21671 / CCUG 45161 / LMG 19568 / NCTC 13146 / CH001A).